We begin with the raw amino-acid sequence, 319 residues long: Large ribosomal subunit protein uL10 (319 aa).

A compositionally biased stretch (low complexity) spans 286 to 295 (ADSGAAAPSA). The segment at 286 to 319 (ADSGAAAPSAAKEEEKKEEPEEESDGDLGMSLFD) is disordered.

The protein belongs to the universal ribosomal protein uL10 family. P0 forms a pentameric complex by interaction with dimers of P1 and P2. Interacts with NSF. In terms of processing, phosphorylated. As to expression, highly expressed in stems, inflorescences and immature seeds (at protein level). Expressed in leaves and mature seeds (at protein level).

Functionally, ribosomal protein P0 is the functional equivalent of E.coli protein L10. In Oryza sativa subsp. japonica (Rice), this protein is Large ribosomal subunit protein uL10.